Here is a 607-residue protein sequence, read N- to C-terminus: Thymidine kinase (607 aa).

Disordered stretches follow at residues Met1 to Thr160 and Asp180 to Leu215. Positions Lys17–Phe32 are enriched in basic and acidic residues. 3 stretches are compositionally biased toward polar residues: residues Ala88 to Pro106, Arg148 to Thr160, and Arg194 to Lys203. Gly291 to Thr298 is an ATP binding site. The active-site Proton acceptor is Glu317. Gln355 contacts substrate. Residue Arg445 coordinates ATP. Arg451 contributes to the substrate binding site.

It belongs to the herpesviridae thymidine kinase family. As to quaternary structure, homodimer.

The protein localises to the virion tegument. The protein resides in the host nucleus. It carries out the reaction thymidine + ATP = dTMP + ADP + H(+). Functionally, catalyzes the transfer of the gamma-phospho group of ATP to thymidine to generate dTMP in the salvage pathway of pyrimidine synthesis. The dTMP serves as a substrate for DNA polymerase during viral DNA replication. Allows the virus to be reactivated and to grow in non-proliferative cells lacking a high concentration of phosphorylated nucleic acid precursors. The polypeptide is Thymidine kinase (Epstein-Barr virus (strain AG876) (HHV-4)).